A 272-amino-acid chain; its full sequence is Auxin-responsive protein IAA5 (272 aa).

Positions 1–92 (MSPPLEPHDY…DSSPRHGASS (92 aa)) are disordered. Low complexity-rich tracts occupy residues 14 to 33 (SAAA…SPNP) and 40 to 50 (PRLTLRLGLPG). Positions 44–48 (LRLGL) match the EAR-like (transcriptional repression) motif. Positions 152–256 (PLYVKVSMDG…RKLKIMRGSD (105 aa)) constitute a PB1 domain.

It belongs to the Aux/IAA family. As to quaternary structure, homodimers and heterodimers. Highly expressed in roots and flowers. Expressed in shoots.

It localises to the nucleus. Its function is as follows. Aux/IAA proteins are short-lived transcriptional factors that function as repressors of early auxin response genes at low auxin concentrations. The protein is Auxin-responsive protein IAA5 (IAA5) of Oryza sativa subsp. indica (Rice).